An 89-amino-acid chain; its full sequence is UPF0147 protein TV0625 (89 aa).

This sequence belongs to the UPF0147 family.

The sequence is that of UPF0147 protein TV0625 from Thermoplasma volcanium (strain ATCC 51530 / DSM 4299 / JCM 9571 / NBRC 15438 / GSS1).